The sequence spans 384 residues: MPVHWSKTGSGGVMQKEFTLGIEEEYLLVDRDSLQLAEAPEALMSTCQADFEGQVSPEFLQCQIEVGTRPHATIAAAREDLKRLRAGVSQRAAEHNLTPIAVSCHPFASWKDQHHTRKERYDALQHALGGVARRMLICGMHVHIGVEDKALRADLMPQLSYFLPHMLALSASSPFWNGEDTGLSSYRLTIFDNLPRTGLPPSFSSWAEYERTTGILVELGVIEDTTKIWWDLRPSHRFPTLETRIMDVQPRLEHALSLAAMNQALMRMLCRMKARNLRWRHYDRFLVGENRWRAQRYGVGEGLIDFGDRSLKPMTVLMDELMGMLSEDAEALGTLPEIARLRQIAEHGNSATRQRRVHAEALARGEDAGRAVVRHLIEEFHADL.

This sequence belongs to the glutamate--cysteine ligase type 2 family. YbdK subfamily.

The enzyme catalyses L-cysteine + L-glutamate + ATP = gamma-L-glutamyl-L-cysteine + ADP + phosphate + H(+). ATP-dependent carboxylate-amine ligase which exhibits weak glutamate--cysteine ligase activity. In Ruegeria pomeroyi (strain ATCC 700808 / DSM 15171 / DSS-3) (Silicibacter pomeroyi), this protein is Putative glutamate--cysteine ligase 2.